A 170-amino-acid chain; its full sequence is MLKLLDFSLRLSVIPLSVATIWLTVTNKQDNSIYGYLKYSDLTGLKYMVFISGICASYAFIAAVSTWIRCIVTKTWLFFVSDQIVAYLMVTSGTAVLEILYLAYNGDREVSWSEACTSYGKFCYRMKLAVILHALALSCFIILAVISAYRAFSIFEPPLVPSKVVEEDRA.

Topologically, residues 1–4 (MLKL) are cytoplasmic. A helical transmembrane segment spans residues 5–25 (LDFSLRLSVIPLSVATIWLTV). The Extracellular segment spans residues 26 to 47 (TNKQDNSIYGYLKYSDLTGLKY). The chain crosses the membrane as a helical span at residues 48 to 68 (MVFISGICASYAFIAAVSTWI). Over 69-83 (RCIVTKTWLFFVSDQ) the chain is Cytoplasmic. A helical membrane pass occupies residues 84–104 (IVAYLMVTSGTAVLEILYLAY). Residues 105 to 127 (NGDREVSWSEACTSYGKFCYRMK) are Extracellular-facing. The helical transmembrane segment at 128–148 (LAVILHALALSCFIILAVISA) threads the bilayer. Residues 149–170 (YRAFSIFEPPLVPSKVVEEDRA) lie on the Cytoplasmic side of the membrane.

The protein belongs to the Casparian strip membrane proteins (CASP) family. In terms of assembly, homodimer and heterodimers.

It is found in the cell membrane. The chain is CASP-like protein 2D1 from Populus trichocarpa (Western balsam poplar).